A 332-amino-acid polypeptide reads, in one-letter code: NADH-quinone oxidoreductase subunit H (332 aa).

9 helical membrane-spanning segments follow: residues 8–28 (IIEC…LAGF), 44–66 (IGPN…KLFA), 78–98 (PIFI…MAPI), 120–140 (VGIL…LLAG), 157–177 (IQFL…LMII), 196–216 (WLIF…YVEL), 245–265 (MFFI…SLVF), 274–294 (FIPG…LFMW), and 312–332 (WKIM…ILLF).

This sequence belongs to the complex I subunit 1 family. As to quaternary structure, NDH-1 is composed of 14 different subunits. Subunits NuoA, H, J, K, L, M, N constitute the membrane sector of the complex.

The protein resides in the cell inner membrane. It carries out the reaction a quinone + NADH + 5 H(+)(in) = a quinol + NAD(+) + 4 H(+)(out). Its function is as follows. NDH-1 shuttles electrons from NADH, via FMN and iron-sulfur (Fe-S) centers, to quinones in the respiratory chain. The immediate electron acceptor for the enzyme in this species is believed to be ubiquinone. Couples the redox reaction to proton translocation (for every two electrons transferred, four hydrogen ions are translocated across the cytoplasmic membrane), and thus conserves the redox energy in a proton gradient. This subunit may bind ubiquinone. The protein is NADH-quinone oxidoreductase subunit H of Helicobacter hepaticus (strain ATCC 51449 / 3B1).